The sequence spans 331 residues: B-box zinc finger protein 21 (331 aa).

Residues Cys5, Cys8, Cys28, His34, Cys60, Cys63, Cys83, and His93 each contribute to the Zn(2+) site. The segment at 5–47 adopts a B box-type 1; atypical zinc-finger fold; the sequence is CDVCDKEEASVFCTADEASLCGGCDHQVHHANKLASKHLRFSL. The B box-type 2; atypical zinc-finger motif lies at 60 to 102; it reads CDICQDKKALLFCQQDRAILCKDCDSSIHAANEHTKKHDRFLL. Composition is skewed to low complexity over residues 115-126 and 228-238; these read KPTSKSSSSSSS and NNNNNNNNNNN. Disordered stretches follow at residues 115–167 and 209–241; these read KPTS…GGDA and DDDGVLPYMEPEDDNNTKRNNNNNNNNNNNTVS.

Interacts with COP1, HY5 and BBX32. Interacts with FLZ1.

The protein resides in the nucleus. Its function is as follows. Transcription activator that acts as a positive regulator of seedling photomorphogenesis. Acts downstream of COP1 and play an important role in early and long-term adjustment of the shade avoidance syndrome (SAS) responses in natural environments. The sequence is that of B-box zinc finger protein 21 from Arabidopsis thaliana (Mouse-ear cress).